The chain runs to 393 residues: Chorismate synthase (393 aa).

The NADP(+) site is built by arginine 40 and arginine 46. FMN-binding positions include 129-131 (RSS), 249-250 (QA), glycine 301, 316-320 (KPIPT), and arginine 342.

This sequence belongs to the chorismate synthase family. Homotetramer. FMNH2 serves as cofactor.

The enzyme catalyses 5-O-(1-carboxyvinyl)-3-phosphoshikimate = chorismate + phosphate. It functions in the pathway metabolic intermediate biosynthesis; chorismate biosynthesis; chorismate from D-erythrose 4-phosphate and phosphoenolpyruvate: step 7/7. Its function is as follows. Catalyzes the anti-1,4-elimination of the C-3 phosphate and the C-6 proR hydrogen from 5-enolpyruvylshikimate-3-phosphate (EPSP) to yield chorismate, which is the branch point compound that serves as the starting substrate for the three terminal pathways of aromatic amino acid biosynthesis. This reaction introduces a second double bond into the aromatic ring system. In Pelobacter propionicus (strain DSM 2379 / NBRC 103807 / OttBd1), this protein is Chorismate synthase.